A 967-amino-acid chain; its full sequence is uncharacterized protein (967 aa).

Positions 1–29 (MKKKLKSVLIWFLIFTFNLSLGSFREVFA) are cleaved as a signal peptide. BIG2 domains follow at residues 38 to 107 (TAIT…QDGS) and 133 to 190 (LPVG…VNDG).

This is an uncharacterized protein from Clostridium acetobutylicum (strain ATCC 824 / DSM 792 / JCM 1419 / IAM 19013 / LMG 5710 / NBRC 13948 / NRRL B-527 / VKM B-1787 / 2291 / W).